Consider the following 100-residue polypeptide: uncharacterized protein (100 aa).

This is an uncharacterized protein from Mycoplasma pneumoniae (strain ATCC 29342 / M129 / Subtype 1) (Mycoplasmoides pneumoniae).